A 330-amino-acid chain; its full sequence is Zinc finger protein sdz-12 (330 aa).

5 C2H2-type zinc fingers span residues 27 to 48, 63 to 85, 91 to 113, 120 to 144, and 153 to 176; these read PQCQ…HMKH, FRCE…QITH, KKCS…LHNH, FDCP…LVNH, and APCG…HFDH. Residues 183–195 are compositionally biased toward low complexity; it reads SAPAPTSSARLSP. A disordered region spans residues 183 to 203; that stretch reads SAPAPTSSARLSPITVSTSGS. A C2H2-type 6 zinc finger spans residues 271-293; it reads FECKHCTIKFHDATMSIMHNALH.

This sequence belongs to the krueppel C2H2-type zinc-finger protein family. Expressed in the somatic gonad.

In terms of biological role, together with ehn-3, may play a role in gonadogenesis. This is Zinc finger protein sdz-12 from Caenorhabditis elegans.